The primary structure comprises 702 residues: MHWMLLVSLLLLLWLLVASPRLAWLKAGLLSLFLLLLSVWGLVDRLSGDGINAATLYHLRADMDGAGVSDFSGYIAVFVGMLLLSLSPLLLVRVRRFQRPRGGGAVFAGFVGMLLVGIAASPLYRDGKRLYYQLRPVDYATVVPEYQVPQQPLHKRKNIVWIYGESLERTYFDEQVFPGLMPNLRALATEAVDVRNLASTEGSGWTIAGMVASMCGVPLTTAPGDENSMDRMGMFLPEARCLGDYLKDQGYRNHYVGGADASFAGKGRFLSSHGFDVVHDVHHFHDQGVAPKHFSAWGVHDDVLLDDAWDTFQTLSRAGQPFMLTTLTMDTHHPAGHLPLACKGQQYDSALGDIGLLHAIKCSDRLIGELVARIRNSRYGKNTIIVIASDHLAMPNDLSDVLAKQKRENLLLFLGKDIAPQQVLTRAGSTLDSGATLLQLLEPGMRTLGFGRSLLARDAPPSASVAASRDSGKDYPRYLAYARTLWTGRSTRMLRINGNGDVVVGVQQVRPPVLLEYDKDTNLKTVYLENTSRQFDRTHSKGTLAYVDRCTAFEDGSADGHWCALVVDRHQSMKLYRDPDLTRGIAVDAPLEATQQGPRPRVRQPIMLTQAARKTDAGRYMLELYAKRRPTRAFWVEAVSSERKVVLAQQWVVPDAAGRIRMPVGLEHAVEDLEIRAWLDYTEDVSVDDLALVKDIPVADRS.

A run of 3 helical transmembrane segments spans residues 2–22 (HWML…SPRL), 71–91 (FSGY…PLLL), and 103–123 (GGAV…ASPL).

The protein belongs to the OpgB family.

It localises to the cell inner membrane. It catalyses the reaction a phosphatidylglycerol + a membrane-derived-oligosaccharide D-glucose = a 1,2-diacyl-sn-glycerol + a membrane-derived-oligosaccharide 6-(glycerophospho)-D-glucose.. The protein operates within glycan metabolism; osmoregulated periplasmic glucan (OPG) biosynthesis. Transfers a phosphoglycerol residue from phosphatidylglycerol to the membrane-bound nascent glucan backbones. This is Phosphoglycerol transferase I from Xanthomonas euvesicatoria pv. vesicatoria (strain 85-10) (Xanthomonas campestris pv. vesicatoria).